A 176-amino-acid chain; its full sequence is uncharacterized protein (176 aa).

The segment covering 87-100 (ASASSQLRASRVQS) has biased composition (low complexity). Residues 87–109 (ASASSQLRASRVQSGTRQSARAG) are disordered.

This is an uncharacterized protein from Homo sapiens (Human).